Consider the following 266-residue polypeptide: Glutamate racemase (266 aa).

Residues 9–10 (DS) and 41–42 (YG) each bind substrate. The Proton donor/acceptor role is filled by Cys72. 73 to 74 (NT) is a binding site for substrate. Catalysis depends on Cys184, which acts as the Proton donor/acceptor. A substrate-binding site is contributed by 185–186 (TH).

This sequence belongs to the aspartate/glutamate racemases family.

The catalysed reaction is L-glutamate = D-glutamate. It participates in cell wall biogenesis; peptidoglycan biosynthesis. Its function is as follows. Provides the (R)-glutamate required for cell wall biosynthesis. This chain is Glutamate racemase, found in Staphylococcus aureus (strain bovine RF122 / ET3-1).